Consider the following 438-residue polypeptide: Na(+)/H(+) antiporter NhaA 2 (438 aa).

The next 11 membrane-spanning stretches (helical) occupy residues 21-41 (SGGIVLLGATVLALVLANSPW), 66-86 (LHHWINDGLMAVFFFLVGLEL), 102-122 (MLPIAAAFGGMLVPALIFHFI), 130-150 (KGWGIPMATDIAFALGVLALL), 160-180 (IFLTALAIVDDLGAVLVIALF), 183-203 (GELAVGKLLVALVLLLILIAG), 206-226 (LGVQSLNFYGLLGFCLWVVLL), 308-328 (WVIFGVIPIFALANAGLVLQL), 341-361 (LGVALGLLLGKPLGILFFSWI), 376-396 (WMDVFGVGILGGIGFTMSLFI), and 410-430 (AKLGIFIASMLAGAAGFTVLS).

It belongs to the NhaA Na(+)/H(+) (TC 2.A.33) antiporter family.

It localises to the cell inner membrane. The enzyme catalyses Na(+)(in) + 2 H(+)(out) = Na(+)(out) + 2 H(+)(in). In terms of biological role, na(+)/H(+) antiporter that extrudes sodium in exchange for external protons. The sequence is that of Na(+)/H(+) antiporter NhaA 2 from Syntrophotalea carbinolica (strain DSM 2380 / NBRC 103641 / GraBd1) (Pelobacter carbinolicus).